Consider the following 105-residue polypeptide: Protein yippee-like At4g27740 (105 aa).

In terms of domain architecture, Yippee spans 8-105 (PTYFCRNCEN…IEKLKLTKRY (98 aa)). Zn(2+)-binding residues include Cys12, Cys15, Cys68, and Cys71.

Belongs to the yippee family.

This Arabidopsis thaliana (Mouse-ear cress) protein is Protein yippee-like At4g27740.